A 330-amino-acid polypeptide reads, in one-letter code: NADH-quinone oxidoreductase subunit H (330 aa).

8 helical membrane-spanning segments follow: residues 5-25, 78-98, 120-140, 155-175, 191-211, 243-263, 271-291, and 308-328; these read LLTL…VLTL, WVFM…FAVI, IGLL…ALGG, AMAQ…PVVM, SLPN…AIMA, FFVG…VLFL, LPGI…FIWV, and WKIL…WLIW.

It belongs to the complex I subunit 1 family. In terms of assembly, NDH-1 is composed of 14 different subunits. Subunits NuoA, H, J, K, L, M, N constitute the membrane sector of the complex.

It is found in the cell inner membrane. It carries out the reaction a quinone + NADH + 5 H(+)(in) = a quinol + NAD(+) + 4 H(+)(out). Its function is as follows. NDH-1 shuttles electrons from NADH, via FMN and iron-sulfur (Fe-S) centers, to quinones in the respiratory chain. The immediate electron acceptor for the enzyme in this species is believed to be ubiquinone. Couples the redox reaction to proton translocation (for every two electrons transferred, four hydrogen ions are translocated across the cytoplasmic membrane), and thus conserves the redox energy in a proton gradient. This subunit may bind ubiquinone. This Syntrophotalea carbinolica (strain DSM 2380 / NBRC 103641 / GraBd1) (Pelobacter carbinolicus) protein is NADH-quinone oxidoreductase subunit H.